The primary structure comprises 426 residues: Serine--tRNA ligase (426 aa).

Residue 232-234 coordinates L-serine; the sequence is TAE. 263 to 265 lines the ATP pocket; it reads RSE. Glu286 is a binding site for L-serine. Position 350–353 (350–353) interacts with ATP; the sequence is EISS. Ser385 serves as a coordination point for L-serine.

It belongs to the class-II aminoacyl-tRNA synthetase family. Type-1 seryl-tRNA synthetase subfamily. Homodimer. The tRNA molecule binds across the dimer.

Its subcellular location is the cytoplasm. The enzyme catalyses tRNA(Ser) + L-serine + ATP = L-seryl-tRNA(Ser) + AMP + diphosphate + H(+). It catalyses the reaction tRNA(Sec) + L-serine + ATP = L-seryl-tRNA(Sec) + AMP + diphosphate + H(+). The protein operates within aminoacyl-tRNA biosynthesis; selenocysteinyl-tRNA(Sec) biosynthesis; L-seryl-tRNA(Sec) from L-serine and tRNA(Sec): step 1/1. Its function is as follows. Catalyzes the attachment of serine to tRNA(Ser). Is also able to aminoacylate tRNA(Sec) with serine, to form the misacylated tRNA L-seryl-tRNA(Sec), which will be further converted into selenocysteinyl-tRNA(Sec). In Pediococcus pentosaceus (strain ATCC 25745 / CCUG 21536 / LMG 10740 / 183-1w), this protein is Serine--tRNA ligase.